Here is a 347-residue protein sequence, read N- to C-terminus: GPN-loop GTPase 2 (347 aa).

Gly-12–Thr-17 serves as a coordination point for GTP. The Gly-Pro-Asn (GPN)-loop; involved in dimer interface signature appears at Gly-69–Asn-71. Residue Ser-175–Asp-178 participates in GTP binding.

It belongs to the GPN-loop GTPase family. As to quaternary structure, heterodimers with NPA3/GPN1 or GPN3. Binds to RNA polymerase II (RNAPII).

The protein localises to the cytoplasm. Its function is as follows. Small GTPase required for proper localization of RNA polymerase II and III (RNAPII and RNAPIII). May act at an RNAP assembly step prior to nuclear import. Required for establishment of sister chromatid cohesion. In Saccharomyces cerevisiae (strain ATCC 204508 / S288c) (Baker's yeast), this protein is GPN-loop GTPase 2.